The following is a 229-amino-acid chain: ATP synthase subunit a (229 aa).

6 consecutive transmembrane segments (helical) span residues 25 to 45 (ADAV…SIAA), 82 to 102 (FFPL…IGLI), 104 to 124 (GFFP…VVFV), 142 to 162 (FLGP…IGHL), 181 to 201 (LVLI…MMLM), and 202 to 222 (GVLV…IYIQ).

This sequence belongs to the ATPase A chain family. As to quaternary structure, F-type ATPases have 2 components, CF(1) - the catalytic core - and CF(0) - the membrane proton channel. CF(1) has five subunits: alpha(3), beta(3), gamma(1), delta(1), epsilon(1). CF(0) has three main subunits: a(1), b(2) and c(9-12). The alpha and beta chains form an alternating ring which encloses part of the gamma chain. CF(1) is attached to CF(0) by a central stalk formed by the gamma and epsilon chains, while a peripheral stalk is formed by the delta and b chains.

Its subcellular location is the cell inner membrane. Functionally, key component of the proton channel; it plays a direct role in the translocation of protons across the membrane. In Geobacter sp. (strain M21), this protein is ATP synthase subunit a.